Here is a 333-residue protein sequence, read N- to C-terminus: Glycerol-3-phosphate dehydrogenase [NAD(P)+] (333 aa).

Residues phenylalanine 19, arginine 40, arginine 41, and lysine 113 each coordinate NADPH. Residues lysine 113 and glycine 141 each coordinate sn-glycerol 3-phosphate. Alanine 145 provides a ligand contact to NADPH. Sn-glycerol 3-phosphate is bound by residues lysine 196, aspartate 249, serine 259, arginine 260, and asparagine 261. Lysine 196 serves as the catalytic Proton acceptor. Arginine 260 provides a ligand contact to NADPH. NADPH is bound by residues valine 282 and glutamate 283.

It belongs to the NAD-dependent glycerol-3-phosphate dehydrogenase family.

It is found in the cytoplasm. It catalyses the reaction sn-glycerol 3-phosphate + NAD(+) = dihydroxyacetone phosphate + NADH + H(+). The catalysed reaction is sn-glycerol 3-phosphate + NADP(+) = dihydroxyacetone phosphate + NADPH + H(+). It participates in membrane lipid metabolism; glycerophospholipid metabolism. Its function is as follows. Catalyzes the reduction of the glycolytic intermediate dihydroxyacetone phosphate (DHAP) to sn-glycerol 3-phosphate (G3P), the key precursor for phospholipid synthesis. The sequence is that of Glycerol-3-phosphate dehydrogenase [NAD(P)+] from Sinorhizobium fredii (strain NBRC 101917 / NGR234).